Reading from the N-terminus, the 111-residue chain is Resistin-like alpha (111 aa).

The first 23 residues, 1–23 (MKTTTCSLLICISLLQLMVPVNT), serve as a signal peptide directing secretion. 5 disulfide bridges follow: Cys55–Cys108, Cys67–Cys107, Cys76–Cys93, Cys78–Cys95, and Cys82–Cys97.

The protein belongs to the resistin/FIZZ family. In terms of assembly, monomer. In terms of tissue distribution, highest levels in adipose tissue.

Its subcellular location is the secreted. Its function is as follows. Probable hormone. Plays a role in pulmonary vascular remodeling. This is Resistin-like alpha (Retnla) from Mus musculus (Mouse).